We begin with the raw amino-acid sequence, 90 residues long: Neuropeptide-like 3 (90 aa).

An N-terminal signal peptide occupies residues 1–16 (MFKLCVFVALLSLAAA). Propeptides lie at residues 17-54 (APAP…LAPQ) and 67-79 (AITQ…LLIK). Ile-89 carries the post-translational modification Isoleucine amide.

The protein localises to the secreted. The sequence is that of Neuropeptide-like 3 (Nplp3) from Drosophila melanogaster (Fruit fly).